The chain runs to 88 residues: Large ribosomal subunit protein bL27 (88 aa).

A disordered region spans residues 1 to 21 (MAHKKGASSSRNGRDSAAQRL).

This sequence belongs to the bacterial ribosomal protein bL27 family.

The polypeptide is Large ribosomal subunit protein bL27 (Mycobacterium avium (strain 104)).